The following is a 169-amino-acid chain: uncharacterized protein (169 aa).

Asparagine 13, asparagine 29, asparagine 39, and asparagine 48 each carry an N-linked (GlcNAc...) asparagine; by host glycan. A Cell attachment site motif is present at residues 109–111 (RGD). Asparagine 135 carries an N-linked (GlcNAc...) asparagine; by host glycan. The chain crosses the membrane as a helical span at residues 145–165 (IYHMAIVYILIMYQIYILSLI).

It is found in the membrane. This is an uncharacterized protein from Acanthamoeba polyphaga (Amoeba).